We begin with the raw amino-acid sequence, 308 residues long: tRNA dimethylallyltransferase (308 aa).

Position 10 to 17 (10 to 17 (GPTASGKT)) interacts with ATP. 12–17 (TASGKT) contacts substrate. Interaction with substrate tRNA regions lie at residues 35 to 38 (DSSL) and 159 to 163 (QRIFR).

It belongs to the IPP transferase family. Monomer. Mg(2+) serves as cofactor.

The catalysed reaction is adenosine(37) in tRNA + dimethylallyl diphosphate = N(6)-dimethylallyladenosine(37) in tRNA + diphosphate. Its function is as follows. Catalyzes the transfer of a dimethylallyl group onto the adenine at position 37 in tRNAs that read codons beginning with uridine, leading to the formation of N6-(dimethylallyl)adenosine (i(6)A). In Francisella tularensis subsp. novicida (strain U112), this protein is tRNA dimethylallyltransferase.